The primary structure comprises 1041 residues: FHIP family protein CG3558 (1041 aa).

Residue Ser490 is modified to Phosphoserine. 5 disordered regions span residues Arg619–Leu648, Lys792–Leu818, Ser858–Ser879, Asp903–Ser947, and Ser959–Ala986. Residues Thr628–Ser637 are compositionally biased toward polar residues. Ser797 is subject to Phosphoserine. Polar residues predominate over residues His800–Leu818. Positions Asp903 to Pro925 are enriched in polar residues. Over residues Ala927–Ser947 the composition is skewed to low complexity. Positions Ser959 to Thr968 are enriched in polar residues.

It belongs to the FHIP family.

This Drosophila melanogaster (Fruit fly) protein is FHIP family protein CG3558.